The chain runs to 443 residues: Serine/threonine-protein phosphatase 2A 55 kDa regulatory subunit B beta isoform (443 aa).

7 WD repeats span residues threonine 22–proline 61, glutamate 87–glutamate 128, alanine 171–asparagine 209, glutamate 220–arginine 260, glutamate 279–glutamate 317, glutamate 334–leucine 375, and aspartate 410–asparagine 443.

It belongs to the phosphatase 2A regulatory subunit B family. PP2A consists of a common heterodimeric core enzyme, composed of a 36 kDa catalytic subunit (subunit C) and a 65 kDa constant regulatory subunit (PR65 or subunit A), that associates with a variety of regulatory subunits.

The protein localises to the cytoplasm. It localises to the cytoskeleton. Its subcellular location is the membrane. Its function is as follows. The B regulatory subunit might modulate substrate selectivity and catalytic activity, and might also direct the localization of the catalytic enzyme to a particular subcellular compartment. Negatively controls the initiation of oocyte maturation. The sequence is that of Serine/threonine-protein phosphatase 2A 55 kDa regulatory subunit B beta isoform (ppp2r2b) from Xenopus tropicalis (Western clawed frog).